The following is a 146-amino-acid chain: Stress enhanced protein 1, chloroplastic (146 aa).

The N-terminal 73 residues, 1–73 (MALSQVSASL…GNRAASVSIR (73 aa)), are a transit peptide targeting the chloroplast. A run of 2 helical transmembrane segments spans residues 84-104 (LDIWLGRGAMVGFAVAITVEI) and 120-140 (LPTVALAVTALVGVLAAVFIF).

It belongs to the ELIP/psbS family.

It is found in the plastid. Its subcellular location is the chloroplast thylakoid membrane. Its function is as follows. May be involved in non-photochemical quenching, a process that maintains the balance between dissipation and utilization of light energy to minimize generation of oxidizing molecules, thereby protecting the plant against photo-oxidative damage. May play a photoprotective role in the thylakoid membrane in response to light stress. The chain is Stress enhanced protein 1, chloroplastic from Arabidopsis thaliana (Mouse-ear cress).